Consider the following 152-residue polypeptide: Aspartate-rich protein (152 aa).

A signal peptide spans 1 to 19 (MQKLLLAVLFFSLLAVATA). The span at 82–113 (ATPKTEAEPGSLDKGEGTKGEKGKEGKKEKGE) shows a compositional bias: basic and acidic residues. The segment at 82-152 (ATPKTEAEPG…VHENDDENED (71 aa)) is disordered. Over residues 135–152 (DDDDDRDDVHENDDENED) the composition is skewed to acidic residues.

In terms of tissue distribution, prismatic layer of shell (at protein level). Expressed primarily in the mantle with highest level in the mantle edge and lower level in the mantle pallium.

It is found in the secreted. This chain is Aspartate-rich protein, found in Margaritifera margaritifera (Freshwater pearl mussel).